A 338-amino-acid polypeptide reads, in one-letter code: Ketol-acid reductoisomerase (NADP(+)) (338 aa).

The region spanning 1–181 is the KARI N-terminal Rossmann domain; it reads MKVFYDKDAD…GGGRAGIIET (181 aa). Residues 24–27, R47, and S52 each bind NADP(+); that span reads YGSQ. H107 is an active-site residue. Residue G133 coordinates NADP(+). The KARI C-terminal knotted domain maps to 182–327; the sequence is NFREETETDL…EKLRAMMPWI (146 aa). Mg(2+) is bound by residues D190, E194, E226, and E230. A substrate-binding site is contributed by S251.

The protein belongs to the ketol-acid reductoisomerase family. Requires Mg(2+) as cofactor.

The enzyme catalyses (2R)-2,3-dihydroxy-3-methylbutanoate + NADP(+) = (2S)-2-acetolactate + NADPH + H(+). It carries out the reaction (2R,3R)-2,3-dihydroxy-3-methylpentanoate + NADP(+) = (S)-2-ethyl-2-hydroxy-3-oxobutanoate + NADPH + H(+). The protein operates within amino-acid biosynthesis; L-isoleucine biosynthesis; L-isoleucine from 2-oxobutanoate: step 2/4. It functions in the pathway amino-acid biosynthesis; L-valine biosynthesis; L-valine from pyruvate: step 2/4. In terms of biological role, involved in the biosynthesis of branched-chain amino acids (BCAA). Catalyzes an alkyl-migration followed by a ketol-acid reduction of (S)-2-acetolactate (S2AL) to yield (R)-2,3-dihydroxy-isovalerate. In the isomerase reaction, S2AL is rearranged via a Mg-dependent methyl migration to produce 3-hydroxy-3-methyl-2-ketobutyrate (HMKB). In the reductase reaction, this 2-ketoacid undergoes a metal-dependent reduction by NADPH to yield (R)-2,3-dihydroxy-isovalerate. This Cupriavidus taiwanensis (strain DSM 17343 / BCRC 17206 / CCUG 44338 / CIP 107171 / LMG 19424 / R1) (Ralstonia taiwanensis (strain LMG 19424)) protein is Ketol-acid reductoisomerase (NADP(+)).